The primary structure comprises 496 residues: Maintenance of mitochondrial morphology protein 1 (496 aa).

The Lumenal portion of the chain corresponds to 1–22; the sequence is MSSQLNDPTPIPAQSSLSFTQG. A helical membrane pass occupies residues 23–43; that stretch reads FLLGQLSVVLLIAAFIKFFIF. Topologically, residues 44-496 are cytoplasmic; sequence GEAPPPPSRG…SLPGGGVTTT (453 aa). 4 disordered regions span residues 50–96, 276–331, 395–433, and 449–496; these read PSRG…VPSS, PLDT…KSNV, GRTG…SREP, and DLAS…VTTT. Residues 54 to 64 show a composition bias toward basic residues; sequence LSHRSATHRRS. The span at 65-74 shows a compositional bias: polar residues; it reads NSIYSSTQHD. Over residues 75–84 the composition is skewed to basic and acidic residues; sequence GNTRTLREKP. A compositionally biased stretch (polar residues) spans 85–96; it reads SNSNVLRPVPSS. The SMP-LTD domain maps to 131–388; that stretch reads QPESLDWFNV…EPRVQVVGLP (258 aa). A compositionally biased stretch (pro residues) spans 276-287; sequence PLDTPSHSPSPP. The span at 407–418 shows a compositional bias: polar residues; that stretch reads TGSNAPRSSTAA. Basic and acidic residues-rich tracts occupy residues 424–433 and 462–474; these read AHHEDSSREP and GDLR…REES.

This sequence belongs to the MMM1 family. Homodimer. Component of the ER-mitochondria encounter structure (ERMES) or MDM complex, composed of mmm1, mdm10, mdm12 and mdm34. A mmm1 homodimer associates with one molecule of mdm12 on each side in a pairwise head-to-tail manner, and the SMP-LTD domains of mmm1 and mdm12 generate a continuous hydrophobic tunnel for phospholipid trafficking.

The protein resides in the endoplasmic reticulum membrane. Functionally, component of the ERMES/MDM complex, which serves as a molecular tether to connect the endoplasmic reticulum (ER) and mitochondria. Components of this complex are involved in the control of mitochondrial shape and protein biogenesis, and function in nonvesicular lipid trafficking between the ER and mitochondria. The mdm12-mmm1 subcomplex functions in the major beta-barrel assembly pathway that is responsible for biogenesis of all outer membrane beta-barrel proteins, and acts in a late step after the SAM complex. The mdm10-mdm12-mmm1 subcomplex further acts in the TOM40-specific pathway after the action of the mdm12-mmm1 complex. Essential for establishing and maintaining the structure of mitochondria and maintenance of mtDNA nucleoids. The polypeptide is Maintenance of mitochondrial morphology protein 1 (Neosartorya fischeri (strain ATCC 1020 / DSM 3700 / CBS 544.65 / FGSC A1164 / JCM 1740 / NRRL 181 / WB 181) (Aspergillus fischerianus)).